We begin with the raw amino-acid sequence, 142 residues long: Cell wall-binding protein YqgA (142 aa).

An N-terminal signal peptide occupies residues 1–28 (MKQGKFSVFLILLLMLTLVVAPKEKAEA).

Found in a complex with F(1)F(0) ATP synthase and SpoIIIJ and YqjG.

It localises to the secreted. The protein resides in the cell wall. The protein is Cell wall-binding protein YqgA (yqgA) of Bacillus subtilis (strain 168).